Consider the following 266-residue polypeptide: Hydroxyethylthiazole kinase (266 aa).

M43 contributes to the substrate binding site. ATP contacts are provided by R119 and T166. Residue G193 coordinates substrate.

It belongs to the Thz kinase family. Mg(2+) serves as cofactor.

It catalyses the reaction 5-(2-hydroxyethyl)-4-methylthiazole + ATP = 4-methyl-5-(2-phosphooxyethyl)-thiazole + ADP + H(+). The protein operates within cofactor biosynthesis; thiamine diphosphate biosynthesis; 4-methyl-5-(2-phosphoethyl)-thiazole from 5-(2-hydroxyethyl)-4-methylthiazole: step 1/1. Functionally, catalyzes the phosphorylation of the hydroxyl group of 4-methyl-5-beta-hydroxyethylthiazole (THZ). This is Hydroxyethylthiazole kinase from Methanococcus maripaludis (strain C5 / ATCC BAA-1333).